Reading from the N-terminus, the 329-residue chain is GTP 3',8-cyclase (329 aa).

Positions 8–234 constitute a Radical SAM core domain; that stretch reads AFARKYYYLR…QLRQRSDGPA (227 aa). Arginine 17 is a GTP binding site. Positions 24 and 28 each coordinate [4Fe-4S] cluster. Tyrosine 30 is a binding site for S-adenosyl-L-methionine. Cysteine 31 provides a ligand contact to [4Fe-4S] cluster. A GTP-binding site is contributed by arginine 68. Residue glycine 72 participates in S-adenosyl-L-methionine binding. Threonine 99 is a GTP binding site. Serine 123 contributes to the S-adenosyl-L-methionine binding site. GTP is bound at residue lysine 160. Methionine 194 lines the S-adenosyl-L-methionine pocket. 2 residues coordinate [4Fe-4S] cluster: cysteine 257 and cysteine 260. 262–264 serves as a coordination point for GTP; it reads RLR. Cysteine 274 serves as a coordination point for [4Fe-4S] cluster.

The protein belongs to the radical SAM superfamily. MoaA family. Monomer and homodimer. Requires [4Fe-4S] cluster as cofactor.

The catalysed reaction is GTP + AH2 + S-adenosyl-L-methionine = (8S)-3',8-cyclo-7,8-dihydroguanosine 5'-triphosphate + 5'-deoxyadenosine + L-methionine + A + H(+). It functions in the pathway cofactor biosynthesis; molybdopterin biosynthesis. Its function is as follows. Catalyzes the cyclization of GTP to (8S)-3',8-cyclo-7,8-dihydroguanosine 5'-triphosphate. In Escherichia coli O17:K52:H18 (strain UMN026 / ExPEC), this protein is GTP 3',8-cyclase.